The following is a 538-amino-acid chain: Phosphoenolpyruvate carboxykinase (ATP) (538 aa).

3 residues coordinate substrate: Arg-61, Tyr-195, and Lys-201. ATP contacts are provided by residues Lys-201, His-220, and 236–244 (GLSGTGKTT). Mn(2+) contacts are provided by Lys-201 and His-220. Residue Asp-257 coordinates Mn(2+). The ATP site is built by Glu-285, Arg-323, and Thr-449. Arg-323 contributes to the substrate binding site.

This sequence belongs to the phosphoenolpyruvate carboxykinase (ATP) family. Requires Mn(2+) as cofactor.

Its subcellular location is the cytoplasm. It carries out the reaction oxaloacetate + ATP = phosphoenolpyruvate + ADP + CO2. The protein operates within carbohydrate biosynthesis; gluconeogenesis. Its function is as follows. Involved in the gluconeogenesis. Catalyzes the conversion of oxaloacetate (OAA) to phosphoenolpyruvate (PEP) through direct phosphoryl transfer between the nucleoside triphosphate and OAA. In Nitrobacter hamburgensis (strain DSM 10229 / NCIMB 13809 / X14), this protein is Phosphoenolpyruvate carboxykinase (ATP).